Consider the following 37-residue polypeptide: Large ribosomal subunit protein bL36A (37 aa).

The protein belongs to the bacterial ribosomal protein bL36 family.

This chain is Large ribosomal subunit protein bL36A, found in Neisseria meningitidis serogroup C (strain 053442).